We begin with the raw amino-acid sequence, 832 residues long: Protein translocase subunit SecA (832 aa).

ATP-binding positions include Gln87, Gly105–Thr109, and Asp512.

Belongs to the SecA family. As to quaternary structure, monomer and homodimer. Part of the essential Sec protein translocation apparatus which comprises SecA, SecYEG and auxiliary proteins SecDF-YajC and YidC.

Its subcellular location is the cell membrane. The protein resides in the cytoplasm. It catalyses the reaction ATP + H2O + cellular proteinSide 1 = ADP + phosphate + cellular proteinSide 2.. Functionally, part of the Sec protein translocase complex. Interacts with the SecYEG preprotein conducting channel. Has a central role in coupling the hydrolysis of ATP to the transfer of proteins into and across the cell membrane, serving as an ATP-driven molecular motor driving the stepwise translocation of polypeptide chains across the membrane. This is Protein translocase subunit SecA from Wigglesworthia glossinidia brevipalpis.